The primary structure comprises 429 residues: UDP-N-acetylglucosamine 1-carboxyvinyltransferase (429 aa).

Position 22 to 23 (22 to 23 (KN)) interacts with phosphoenolpyruvate. Position 102 (R102) interacts with UDP-N-acetyl-alpha-D-glucosamine. C126 (proton donor) is an active-site residue. C126 bears the 2-(S-cysteinyl)pyruvic acid O-phosphothioketal mark. UDP-N-acetyl-alpha-D-glucosamine is bound by residues 131 to 135 (RPVDL), 171 to 174 (KVSV), D316, and I338.

This sequence belongs to the EPSP synthase family. MurA subfamily.

The protein resides in the cytoplasm. It carries out the reaction phosphoenolpyruvate + UDP-N-acetyl-alpha-D-glucosamine = UDP-N-acetyl-3-O-(1-carboxyvinyl)-alpha-D-glucosamine + phosphate. It functions in the pathway cell wall biogenesis; peptidoglycan biosynthesis. In terms of biological role, cell wall formation. Adds enolpyruvyl to UDP-N-acetylglucosamine. The sequence is that of UDP-N-acetylglucosamine 1-carboxyvinyltransferase from Brucella abortus (strain S19).